A 544-amino-acid polypeptide reads, in one-letter code: Cytochrome P450 82A1 (544 aa).

A heme-binding site is contributed by Cys-481.

Belongs to the cytochrome P450 family. It depends on heme as a cofactor.

It localises to the membrane. This chain is Cytochrome P450 82A1 (CYP82A1), found in Pisum sativum (Garden pea).